The primary structure comprises 292 residues: Glycine--tRNA ligase alpha subunit (292 aa).

It belongs to the class-II aminoacyl-tRNA synthetase family. In terms of assembly, tetramer of two alpha and two beta subunits.

The protein resides in the cytoplasm. It catalyses the reaction tRNA(Gly) + glycine + ATP = glycyl-tRNA(Gly) + AMP + diphosphate. In Geobacter sulfurreducens (strain ATCC 51573 / DSM 12127 / PCA), this protein is Glycine--tRNA ligase alpha subunit.